Reading from the N-terminus, the 209-residue chain is Pyridoxine/pyridoxamine 5'-phosphate oxidase (209 aa).

Residues 7-10 (REDY) and Lys64 contribute to the substrate site. Residues 59 to 64 (RIVLLK), 74 to 75 (FT), Arg80, and Lys81 each bind FMN. Residues Tyr121, Arg125, and Ser129 each coordinate substrate. FMN is bound by residues 138 to 139 (QS) and Trp182. 188-190 (RLH) is a substrate binding site. Position 192 (Arg192) interacts with FMN.

The protein belongs to the pyridoxamine 5'-phosphate oxidase family. In terms of assembly, homodimer. The cofactor is FMN.

The catalysed reaction is pyridoxamine 5'-phosphate + O2 + H2O = pyridoxal 5'-phosphate + H2O2 + NH4(+). It carries out the reaction pyridoxine 5'-phosphate + O2 = pyridoxal 5'-phosphate + H2O2. It participates in cofactor metabolism; pyridoxal 5'-phosphate salvage; pyridoxal 5'-phosphate from pyridoxamine 5'-phosphate: step 1/1. The protein operates within cofactor metabolism; pyridoxal 5'-phosphate salvage; pyridoxal 5'-phosphate from pyridoxine 5'-phosphate: step 1/1. Functionally, catalyzes the oxidation of either pyridoxine 5'-phosphate (PNP) or pyridoxamine 5'-phosphate (PMP) into pyridoxal 5'-phosphate (PLP). This Actinobacillus pleuropneumoniae serotype 5b (strain L20) protein is Pyridoxine/pyridoxamine 5'-phosphate oxidase.